The following is a 367-amino-acid chain: Alanine racemase (367 aa).

K34 functions as the Proton acceptor; specific for D-alanine in the catalytic mechanism. K34 bears the N6-(pyridoxal phosphate)lysine mark. R129 is a substrate binding site. Catalysis depends on Y251, which acts as the Proton acceptor; specific for L-alanine. Position 299 (M299) interacts with substrate.

Belongs to the alanine racemase family. Requires pyridoxal 5'-phosphate as cofactor.

The catalysed reaction is L-alanine = D-alanine. Its pathway is amino-acid biosynthesis; D-alanine biosynthesis; D-alanine from L-alanine: step 1/1. Catalyzes the interconversion of L-alanine and D-alanine. May also act on other amino acids. This chain is Alanine racemase (alr), found in Thiobacillus denitrificans (strain ATCC 25259 / T1).